The primary structure comprises 849 residues: Disks large homolog 3 (849 aa).

The segment at 32 to 101 (DWQVPDPYGP…GKNTPKLNGS (70 aa)) is disordered. The segment covering 41–53 (PSGGNGASSGYGG) has biased composition (gly residues). A compositionally biased stretch (polar residues) spans 57–69 (QTLPSQAGATPTP). PDZ domains follow at residues 149–235 (EIVL…VRRR), 244–330 (EVNL…VAKP), and 404–484 (KIIL…AQYR). Ser-157 carries the post-translational modification Phosphoserine. An SH3 domain is found at 519–589 (KRSLYVRALF…PSKKRVEKKE (71 aa)). Positions 659 to 834 (ARPVIILGPM…IYNKIKQIIE (176 aa)) constitute a Guanylate kinase-like domain. Residue Tyr-705 is modified to Phosphotyrosine.

This sequence belongs to the MAGUK family. As to quaternary structure, interacts through its PDZ domains with NETO1 and APC. Interacts through its first two PDZ domains with ERBB4. Interacts through its third PDZ domain with NLGN1, and probably with NLGN2 and NLGN3. Interacts through its PDZ domains with GRIN2B and SYNGAP1. Interacts through its guanylate kinase-like domain with DLGAP1, DLGAP2, DLGAP3 and DLGAP4. Interacts with FRMPD4 (via C-terminus). Interacts with LRFN2. Interacts with LRFN1 and LRFN4. Interacts with FLTP. Interacts with DGKI (via PDZ-binding motif).

Functionally, required for learning most likely through its role in synaptic plasticity following NMDA receptor signaling. In Rattus norvegicus (Rat), this protein is Disks large homolog 3 (Dlg3).